A 185-amino-acid chain; its full sequence is Elongation factor P (185 aa).

This sequence belongs to the elongation factor P family.

It is found in the cytoplasm. It functions in the pathway protein biosynthesis; polypeptide chain elongation. In terms of biological role, involved in peptide bond synthesis. Stimulates efficient translation and peptide-bond synthesis on native or reconstituted 70S ribosomes in vitro. Probably functions indirectly by altering the affinity of the ribosome for aminoacyl-tRNA, thus increasing their reactivity as acceptors for peptidyl transferase. In Picosynechococcus sp. (strain ATCC 27264 / PCC 7002 / PR-6) (Agmenellum quadruplicatum), this protein is Elongation factor P.